Reading from the N-terminus, the 238-residue chain is Adenylate dimethylallyltransferase (238 aa).

The protein belongs to the isopentenyl transferase family.

It catalyses the reaction dimethylallyl diphosphate + AMP = N(6)-(dimethylallyl)adenosine 5'-phosphate + diphosphate. Functionally, transfers dimethylallyl groups to AMP as part of the biosynthesis of cytokinin phytohormones. This chain is Adenylate dimethylallyltransferase (tzs), found in Ralstonia nicotianae (strain ATCC BAA-1114 / GMI1000) (Ralstonia solanacearum).